The chain runs to 127 residues: MARITAEDCNKIIPDRFRLVVLATRYAKLLNYKVETNQIKKEKRDKPPVISLRRIAAGKVSVPQLEQDLINSLRTSSMIEPLVNQDESEDVEEKFEYLPEVYIGEDYSDLDDQIFINENGEDYETDK.

It belongs to the RNA polymerase subunit omega family. As to quaternary structure, the RNAP catalytic core consists of 2 alpha, 1 beta, 1 beta' and 1 omega subunit. When a sigma factor is associated with the core the holoenzyme is formed, which can initiate transcription.

The catalysed reaction is RNA(n) + a ribonucleoside 5'-triphosphate = RNA(n+1) + diphosphate. In terms of biological role, promotes RNA polymerase assembly. Latches the N- and C-terminal regions of the beta' subunit thereby facilitating its interaction with the beta and alpha subunits. The polypeptide is DNA-directed RNA polymerase subunit omega (Rickettsia typhi (strain ATCC VR-144 / Wilmington)).